The sequence spans 87 residues: DNA-directed RNA polymerase subunit omega (87 aa).

Belongs to the RNA polymerase subunit omega family. As to quaternary structure, the RNAP catalytic core consists of 2 alpha, 1 beta, 1 beta' and 1 omega subunit. When a sigma factor is associated with the core the holoenzyme is formed, which can initiate transcription.

It carries out the reaction RNA(n) + a ribonucleoside 5'-triphosphate = RNA(n+1) + diphosphate. Functionally, promotes RNA polymerase assembly. Latches the N- and C-terminal regions of the beta' subunit thereby facilitating its interaction with the beta and alpha subunits. The chain is DNA-directed RNA polymerase subunit omega from Pseudomonas entomophila (strain L48).